The chain runs to 354 residues: Uroporphyrinogen decarboxylase (354 aa).

Substrate is bound by residues R27 to R31, D77, Y154, S209, and H327.

It belongs to the uroporphyrinogen decarboxylase family. Homodimer.

It is found in the cytoplasm. It catalyses the reaction uroporphyrinogen III + 4 H(+) = coproporphyrinogen III + 4 CO2. Its pathway is porphyrin-containing compound metabolism; protoporphyrin-IX biosynthesis; coproporphyrinogen-III from 5-aminolevulinate: step 4/4. Catalyzes the decarboxylation of four acetate groups of uroporphyrinogen-III to yield coproporphyrinogen-III. In Pseudomonas savastanoi pv. phaseolicola (strain 1448A / Race 6) (Pseudomonas syringae pv. phaseolicola (strain 1448A / Race 6)), this protein is Uroporphyrinogen decarboxylase.